Consider the following 303-residue polypeptide: Aspartate carbamoyltransferase catalytic subunit (303 aa).

Positions 51 and 52 each coordinate carbamoyl phosphate. Lysine 80 contributes to the L-aspartate binding site. Residues arginine 101, histidine 129, and glutamine 132 each contribute to the carbamoyl phosphate site. Residues arginine 162 and arginine 221 each coordinate L-aspartate. The carbamoyl phosphate site is built by leucine 260 and proline 261.

It belongs to the aspartate/ornithine carbamoyltransferase superfamily. ATCase family. In terms of assembly, heterooligomer of catalytic and regulatory chains.

The catalysed reaction is carbamoyl phosphate + L-aspartate = N-carbamoyl-L-aspartate + phosphate + H(+). The protein operates within pyrimidine metabolism; UMP biosynthesis via de novo pathway; (S)-dihydroorotate from bicarbonate: step 2/3. Its function is as follows. Catalyzes the condensation of carbamoyl phosphate and aspartate to form carbamoyl aspartate and inorganic phosphate, the committed step in the de novo pyrimidine nucleotide biosynthesis pathway. In Saccharolobus islandicus (strain M.16.27) (Sulfolobus islandicus), this protein is Aspartate carbamoyltransferase catalytic subunit.